Reading from the N-terminus, the 241-residue chain is 7-cyano-7-deazaguanine synthase (241 aa).

ATP is bound at residue phenylalanine 15–leucine 25. Zn(2+) contacts are provided by cysteine 203, cysteine 218, cysteine 221, and cysteine 224.

It belongs to the QueC family. Requires Zn(2+) as cofactor.

It carries out the reaction 7-carboxy-7-deazaguanine + NH4(+) + ATP = 7-cyano-7-deazaguanine + ADP + phosphate + H2O + H(+). The protein operates within purine metabolism; 7-cyano-7-deazaguanine biosynthesis. Functionally, catalyzes the ATP-dependent conversion of 7-carboxy-7-deazaguanine (CDG) to 7-cyano-7-deazaguanine (preQ(0)). In Azorhizobium caulinodans (strain ATCC 43989 / DSM 5975 / JCM 20966 / LMG 6465 / NBRC 14845 / NCIMB 13405 / ORS 571), this protein is 7-cyano-7-deazaguanine synthase.